The sequence spans 383 residues: Na(+)/H(+) antiporter NhaA (383 aa).

Helical transmembrane passes span leucine 10 to proline 30, leucine 56 to isoleucine 76, isoleucine 91 to serine 111, glycine 121 to glycine 141, leucine 150 to phenylalanine 170, serine 174 to asparagine 194, valine 206 to alanine 226, proline 254 to serine 274, isoleucine 289 to phenylalanine 308, glycine 327 to phenylalanine 347, and alanine 355 to leucine 375.

Belongs to the NhaA Na(+)/H(+) (TC 2.A.33) antiporter family.

The protein localises to the cell inner membrane. It catalyses the reaction Na(+)(in) + 2 H(+)(out) = Na(+)(out) + 2 H(+)(in). In terms of biological role, na(+)/H(+) antiporter that extrudes sodium in exchange for external protons. The sequence is that of Na(+)/H(+) antiporter NhaA from Francisella tularensis subsp. tularensis (strain WY96-3418).